A 212-amino-acid polypeptide reads, in one-letter code: Peroxisomal membrane protein 4 (212 aa).

Helical transmembrane passes span 97–117 (GETH…LLFG) and 153–173 (WDPF…LFEY). A glycan (N-linked (GlcNAc...) asparagine) is linked at N206.

The protein belongs to the peroxisomal membrane protein PXMP2/4 family. Interacts with PEX19.

It is found in the peroxisome membrane. The protein is Peroxisomal membrane protein 4 (Pxmp4) of Mus musculus (Mouse).